Here is a 247-residue protein sequence, read N- to C-terminus: 3,4-dihydroxy-2-butanone 4-phosphate synthase (247 aa).

Residues 38-39 (RE), D43, 179-183 (RMGQT), and E203 contribute to the D-ribulose 5-phosphate site. Mg(2+) is bound at residue E39.

The protein belongs to the DHBP synthase family. Homodimer. Mg(2+) serves as cofactor. The cofactor is Mn(2+).

The enzyme catalyses D-ribulose 5-phosphate = (2S)-2-hydroxy-3-oxobutyl phosphate + formate + H(+). It participates in cofactor biosynthesis; riboflavin biosynthesis; 2-hydroxy-3-oxobutyl phosphate from D-ribulose 5-phosphate: step 1/1. Catalyzes the conversion of D-ribulose 5-phosphate to formate and 3,4-dihydroxy-2-butanone 4-phosphate. This Methanosarcina mazei (strain ATCC BAA-159 / DSM 3647 / Goe1 / Go1 / JCM 11833 / OCM 88) (Methanosarcina frisia) protein is 3,4-dihydroxy-2-butanone 4-phosphate synthase.